Consider the following 486-residue polypeptide: Nucleolar GTP-binding protein 2 (486 aa).

The segment at 1–20 (MGTGKKEKSRRIREGDTKDG) is disordered. Ser-60, Ser-85, and Ser-155 each carry phosphoserine. A CP-type G domain is found at 212 to 373 (WNELYKVIDS…LIDCPGIVPP (162 aa)). GTP is bound by residues 322 to 329 (GYPNTGKS) and 366 to 370 (DCPGI).

This sequence belongs to the TRAFAC class YlqF/YawG GTPase family. NOG2 subfamily.

It is found in the nucleus. The protein resides in the nucleolus. Functionally, GTPase that associates with pre-60S ribosomal subunits in the nucleolus and is required for their nuclear export and maturation. This Saccharomyces cerevisiae (strain ATCC 204508 / S288c) (Baker's yeast) protein is Nucleolar GTP-binding protein 2 (NOG2).